The chain runs to 236 residues: MHNVDQQELSKFEQMAHSWWDPNGSFKPIHLLNPLRFNYIQTKANGLFGKKVLDVGCGGGILSEAMAQAGAIVTGIDMTTEPLEIAKQHAIENGLTIHYQQTTVEDLRLNHTACNAEKFDVVTCMEMLEHVPDPLSVIQSCKALLKPDGVLFLSTINRTLKAYMLVVIGAEYLLKMLPKGTHEFEKFIKPAELLTWCDQASLECKEMKGYHFNPLTEKFWLNNDVSCNYIAMLKAK.

Positions 36, 56, 77, and 125 each coordinate S-adenosyl-L-methionine.

It belongs to the methyltransferase superfamily. UbiG/COQ3 family.

The catalysed reaction is a 3-demethylubiquinol + S-adenosyl-L-methionine = a ubiquinol + S-adenosyl-L-homocysteine + H(+). The enzyme catalyses a 3-(all-trans-polyprenyl)benzene-1,2-diol + S-adenosyl-L-methionine = a 2-methoxy-6-(all-trans-polyprenyl)phenol + S-adenosyl-L-homocysteine + H(+). The protein operates within cofactor biosynthesis; ubiquinone biosynthesis. Its function is as follows. O-methyltransferase that catalyzes the 2 O-methylation steps in the ubiquinone biosynthetic pathway. The sequence is that of Ubiquinone biosynthesis O-methyltransferase from Haemophilus ducreyi (strain 35000HP / ATCC 700724).